The following is a 272-amino-acid chain: Bis(5'-nucleosyl)-tetraphosphatase, symmetrical (272 aa).

It belongs to the Ap4A hydrolase family.

It catalyses the reaction P(1),P(4)-bis(5'-adenosyl) tetraphosphate + H2O = 2 ADP + 2 H(+). Hydrolyzes diadenosine 5',5'''-P1,P4-tetraphosphate to yield ADP. The sequence is that of Bis(5'-nucleosyl)-tetraphosphatase, symmetrical from Ectopseudomonas mendocina (strain ymp) (Pseudomonas mendocina).